A 388-amino-acid chain; its full sequence is Processive diacylglycerol beta-glucosyltransferase (388 aa).

This sequence belongs to the glycosyltransferase 28 family. UgtP subfamily.

Its subcellular location is the cell membrane. The enzyme catalyses a 1,2-diacyl-3-O-(beta-D-glucopyranosyl)-sn-glycerol + UDP-alpha-D-glucose = a 1,2-diacyl-3-O-(beta-D-Glc-(1-&gt;6)-beta-D-Glc)-sn-glycerol + UDP + H(+). It carries out the reaction a 1,2-diacyl-3-O-(beta-D-Glc-(1-&gt;6)-beta-D-Glc)-sn-glycerol + UDP-alpha-D-glucose = a 1,2-diacyl-3-O-(beta-D-Glc-(1-&gt;6)-beta-D-Glc-(1-&gt;6)-beta-D-Glc)-sn-glycerol + UDP + H(+). The catalysed reaction is a 1,2-diacyl-sn-glycerol + UDP-alpha-D-glucose = a 1,2-diacyl-3-O-(beta-D-glucopyranosyl)-sn-glycerol + UDP + H(+). It functions in the pathway glycolipid metabolism; diglucosyl-diacylglycerol biosynthesis. In terms of biological role, processive glucosyltransferase involved in the biosynthesis of both the bilayer- and non-bilayer-forming membrane glucolipids. Is able to successively transfer up to three glucosyl residues to diacylglycerol (DAG), thereby catalyzing the formation of beta-monoglucosyl-DAG (3-O-(beta-D-glucopyranosyl)-1,2-diacyl-sn-glycerol), beta-diglucosyl-DAG (3-O-(beta-D-glucopyranosyl-beta-(1-&gt;6)-D-glucopyranosyl)-1,2-diacyl-sn-glycerol) and beta-triglucosyl-DAG (3-O-(beta-D-glucopyranosyl-beta-(1-&gt;6)-D-glucopyranosyl-beta-(1-&gt;6)-D-glucopyranosyl)-1,2-diacyl-sn-glycerol). Beta-diglucosyl-DAG is the predominant glycolipid found in Bacillales and is also used as a membrane anchor for lipoteichoic acid (LTA). This is Processive diacylglycerol beta-glucosyltransferase from Bacillus cytotoxicus (strain DSM 22905 / CIP 110041 / 391-98 / NVH 391-98).